The chain runs to 298 residues: Enoyl-CoA hydratase AFT6-1 (298 aa).

Residues M1–N39 form a disordered region.

This sequence belongs to the enoyl-CoA hydratase/isomerase family.

The enzyme catalyses a (3S)-3-hydroxyacyl-CoA = a (2E)-enoyl-CoA + H2O. It carries out the reaction a 4-saturated-(3S)-3-hydroxyacyl-CoA = a (3E)-enoyl-CoA + H2O. Its pathway is mycotoxin biosynthesis. Functionally, enoyl-CoA hydratase; part of the gene clusters that mediate the biosynthesis of the host-selective toxins (HSTs) AF-toxins responsible for Alternaria black spot of strawberry disease by the strawberry pathotype. AF-toxin I and III are valine derivatives of 2,3-dyhydroxy-isovaleric acid and 2-hydroxy-isovaleric acid respectively, while AF II is an isoleucine derivative of 2-hydroxy-valeric acid. These derivatives are bound to a 9,10-epoxy-8-hydroxy-9-methyl-decatrienoic acid (EDA) moiety. On cellular level, AF-toxin affects plasma membrane of susceptible cells and cause a sudden increase in loss of K(+) after a few minutes of toxin treatment. The aldo-keto reductase AFTS1 catalyzes the conversion of 2-keto-isovaleric acid (2-KIV) to 2-hydroxy-isovaleric acid (2-HIV) by reduction of its ketone to an alcohol. The acyl-CoA ligase AFT1, the hydrolase AFT2 and the enoyl-CoA hydratases AFT3 and AFT6, but also the polyketide synthase AFT9, the acyl-CoA dehydrogenase AFT10, the cytochrome P450 monooxygenase AFT11 and the oxidoreductase AFT12 are all involved in the biosynthesis of the AK-, AF- and ACT-toxin common EDA structural moiety. The exact function of each enzyme, and of additional enzymes identified within the AF-toxin clusters have still to be determined. This Alternaria alternata (Alternaria rot fungus) protein is Enoyl-CoA hydratase AFT6-1.